Consider the following 346-residue polypeptide: Thiamine-phosphate synthase (346 aa).

A unknown region spans residues 1–125 (MSVTPNPDQH…SKISAQIRYE (125 aa)). The tract at residues 126–346 (IYDLEVIILK…SKELLGKLKK (221 aa)) is thiamine-phosphate synthase. 4-amino-2-methyl-5-(diphosphooxymethyl)pyrimidine contacts are provided by residues 177–181 (QYRCK) and Asn209. Positions 210 and 229 each coordinate Mg(2+). Ser248 contacts 4-amino-2-methyl-5-(diphosphooxymethyl)pyrimidine. 274 to 276 (TKS) is a binding site for 2-[(2R,5Z)-2-carboxy-4-methylthiazol-5(2H)-ylidene]ethyl phosphate. Lys277 serves as a coordination point for 4-amino-2-methyl-5-(diphosphooxymethyl)pyrimidine. Gly304 serves as a coordination point for 2-[(2R,5Z)-2-carboxy-4-methylthiazol-5(2H)-ylidene]ethyl phosphate.

Belongs to the thiamine-phosphate synthase family. Requires Mg(2+) as cofactor.

The enzyme catalyses 2-[(2R,5Z)-2-carboxy-4-methylthiazol-5(2H)-ylidene]ethyl phosphate + 4-amino-2-methyl-5-(diphosphooxymethyl)pyrimidine + 2 H(+) = thiamine phosphate + CO2 + diphosphate. It catalyses the reaction 2-(2-carboxy-4-methylthiazol-5-yl)ethyl phosphate + 4-amino-2-methyl-5-(diphosphooxymethyl)pyrimidine + 2 H(+) = thiamine phosphate + CO2 + diphosphate. It carries out the reaction 4-methyl-5-(2-phosphooxyethyl)-thiazole + 4-amino-2-methyl-5-(diphosphooxymethyl)pyrimidine + H(+) = thiamine phosphate + diphosphate. It participates in cofactor biosynthesis; thiamine diphosphate biosynthesis; thiamine phosphate from 4-amino-2-methyl-5-diphosphomethylpyrimidine and 4-methyl-5-(2-phosphoethyl)-thiazole: step 1/1. Functionally, condenses 4-methyl-5-(beta-hydroxyethyl)thiazole monophosphate (THZ-P) and 2-methyl-4-amino-5-hydroxymethyl pyrimidine pyrophosphate (HMP-PP) to form thiamine monophosphate (TMP). The protein is Thiamine-phosphate synthase of Prochlorococcus marinus (strain SARG / CCMP1375 / SS120).